The following is a 214-amino-acid chain: Octanoyltransferase (214 aa).

Residues 34–214 (GLQKELVWLL…KFNEIFSSFN (181 aa)) form the BPL/LPL catalytic domain. Substrate is bound by residues 73 to 80 (RGGKYTYH), 145 to 147 (AFG), and 158 to 160 (GVS). The active-site Acyl-thioester intermediate is the C176.

Belongs to the LipB family.

It is found in the cytoplasm. It catalyses the reaction octanoyl-[ACP] + L-lysyl-[protein] = N(6)-octanoyl-L-lysyl-[protein] + holo-[ACP] + H(+). Its pathway is protein modification; protein lipoylation via endogenous pathway; protein N(6)-(lipoyl)lysine from octanoyl-[acyl-carrier-protein]: step 1/2. In terms of biological role, catalyzes the transfer of endogenously produced octanoic acid from octanoyl-acyl-carrier-protein onto the lipoyl domains of lipoate-dependent enzymes. Lipoyl-ACP can also act as a substrate although octanoyl-ACP is likely to be the physiological substrate. The polypeptide is Octanoyltransferase (Ehrlichia canis (strain Jake)).